The chain runs to 113 residues: Gas vesicle protein I2 (113 aa).

The disordered stretch occupies residues 1–93 (MTPTNRHTHG…TVPEQPTHAT (93 aa)). The segment covering 11–22 (QNAQHARRNAQQ) has biased composition (low complexity). The span at 52–63 (EQPTSDTTNPAA) shows a compositional bias: polar residues. Low complexity predominate over residues 69–81 (AQRTNAQNAARNA). Residues 82 to 93 (HSTVPEQPTHAT) show a composition bias toward polar residues.

This sequence belongs to the gas vesicle GvpI family. In terms of assembly, gvpF to GvpM interact with each other in vitro, and may form multi-subunit complex(es). Interacts with GvpC and GvpO.

The protein localises to the gas vesicle. Proteins GvpF to GvpM might be involved in nucleating gas vesicle formation. A minor component of the gas vesicle. Gas vesicles are hollow, gas filled proteinaceous nanostructures found in several microbial planktonic microorganisms. They allow positioning of halobacteria at the optimal depth for growth in the poorly aerated, shallow brine pools of their habitat. In terms of biological role, expression of 2 c-vac DNA fragments containing 2 divergently transcribed regions (gvpE-gvpF-gvpG-gvpH-gvpI-gvpJ-gvpK-gvpL-gvpM and gvpA-gvpC-gvpN-gvpO) allows H.volcanii to produce gas vesicles. This chain is Gas vesicle protein I2, found in Halobacterium salinarum (strain ATCC 700922 / JCM 11081 / NRC-1) (Halobacterium halobium).